We begin with the raw amino-acid sequence, 66 residues long: Large ribosomal subunit protein bL35 (66 aa).

The segment covering 1–16 has biased composition (basic residues); it reads MPKQKTHRASAKRFKR. Residues 1–21 are disordered; the sequence is MPKQKTHRASAKRFKRTGSGG.

It belongs to the bacterial ribosomal protein bL35 family.

The chain is Large ribosomal subunit protein bL35 from Streptococcus agalactiae serotype Ia (strain ATCC 27591 / A909 / CDC SS700).